A 293-amino-acid chain; its full sequence is Protease HtpX homolog (293 aa).

2 helical membrane-spanning segments follow: residues 5–25 (IFLFIVTNLAILLMLSITLRL) and 43–63 (ALLVFSAVLGFGGSLISLAMS). Zn(2+) is bound at residue His-148. The active site involves Glu-149. Residue His-152 coordinates Zn(2+). A run of 2 helical transmembrane segments spans residues 159–179 (VTLALIQGVVNTFVIFLSRII) and 199–219 (FVTSLIAQMVLGILATIIVMW). Glu-225 serves as a coordination point for Zn(2+).

Belongs to the peptidase M48B family. It depends on Zn(2+) as a cofactor.

Its subcellular location is the cell inner membrane. The chain is Protease HtpX homolog from Nitrosomonas europaea (strain ATCC 19718 / CIP 103999 / KCTC 2705 / NBRC 14298).